A 377-amino-acid chain; its full sequence is Succinyl-diaminopimelate desuccinylase (377 aa).

His-67 is a binding site for Zn(2+). Asp-69 is an active-site residue. Residue Asp-100 participates in Zn(2+) binding. The active-site Proton acceptor is Glu-134. The Zn(2+) site is built by Glu-135, Glu-163, and His-349.

Belongs to the peptidase M20A family. DapE subfamily. As to quaternary structure, homodimer. Zn(2+) is required as a cofactor. Co(2+) serves as cofactor.

It catalyses the reaction N-succinyl-(2S,6S)-2,6-diaminopimelate + H2O = (2S,6S)-2,6-diaminopimelate + succinate. Its pathway is amino-acid biosynthesis; L-lysine biosynthesis via DAP pathway; LL-2,6-diaminopimelate from (S)-tetrahydrodipicolinate (succinylase route): step 3/3. In terms of biological role, catalyzes the hydrolysis of N-succinyl-L,L-diaminopimelic acid (SDAP), forming succinate and LL-2,6-diaminopimelate (DAP), an intermediate involved in the bacterial biosynthesis of lysine and meso-diaminopimelic acid, an essential component of bacterial cell walls. The sequence is that of Succinyl-diaminopimelate desuccinylase from Shewanella frigidimarina (strain NCIMB 400).